The sequence spans 338 residues: Putative transposase for insertion sequence element IS4SA (338 aa).

The protein belongs to the transposase 11 family.

The chain is Putative transposase for insertion sequence element IS4SA from Synechocystis sp. (strain ATCC 27184 / PCC 6803 / Kazusa).